The primary structure comprises 741 residues: Nuclear poly(A) polymerase 4 (741 aa).

ATP-binding positions include Phe101 to Ser103, Ala113 to Asp116, Asp114 to Asp116, Asp169, Lys230, Tyr239, and Gly248 to Val249. Mg(2+) is bound by residues Asp114, Asp116, and Asp169. Residues Arg485–Phe492 carry the Nuclear localization signal motif. 2 disordered regions span residues Phe494–Gln556 and Tyr683–Thr741. The segment covering Lys534–Ala551 has biased composition (basic and acidic residues). The segment covering Leu701–Val717 has biased composition (polar residues). Positions Glu721–Ser731 are enriched in basic and acidic residues. The segment covering Phe732 to Thr741 has biased composition (polar residues).

Belongs to the poly(A) polymerase family. In terms of assembly, monomer. Forms a complex with cleavage and polyadenylation specificity factor (CPSF) subunits CFIS2, FIPS3, PAPS1, PABN1, PABN2, PABN3 and FIPS5. It depends on Mg(2+) as a cofactor. Mn(2+) serves as cofactor. In terms of tissue distribution, mostly expressed in flowers (very active in pollen, sepals, styles, and stigmas), cotyledons and hypocotyls, and, to a lower extent, in roots (confined to the vascular tissue in the radicle) and leaves (in the vascular tissue and leaf petioles). Barely detected in stems. Active in the primary and secondary root systems.

Its subcellular location is the nucleus. It carries out the reaction RNA(n) + ATP = RNA(n)-3'-adenine ribonucleotide + diphosphate. In terms of biological role, essential protein. Polymerase that creates the 3'-poly(A) tail of mRNA's. Also required for the endoribonucleolytic cleavage reaction at some polyadenylation sites. May acquire specificity through interaction with a cleavage and polyadenylation specificity factor (CPSF) at its C-terminus. In Arabidopsis thaliana (Mouse-ear cress), this protein is Nuclear poly(A) polymerase 4.